Consider the following 390-residue polypeptide: uncharacterized protein (390 aa).

12 helical membrane passes run 4-24 (IWLF…LSPL), 40-60 (GWMV…AGPI), 68-88 (TVML…GIAP), 98-118 (FAAG…IPVI), 130-150 (IATA…GFLA), 159-179 (FVLS…MPGI), 205-225 (VILL…SFLG), 236-256 (VSQI…GSLI), 273-293 (GMLL…LFLV), 295-315 (AGFF…MGVF), 329-349 (LSNA…GFLY), and 356-376 (GAVT…YQTI).

The protein belongs to the major facilitator superfamily.

It localises to the cell membrane. This is an uncharacterized protein from Bacillus subtilis (strain 168).